Reading from the N-terminus, the 189-residue chain is Putative lipoprotein LppK (189 aa).

Positions 1-22 (MRRNIRVTLGAATIVAALGLSG) are cleaved as a signal peptide. Cys23 carries the N-palmitoyl cysteine lipid modification. A lipid anchor (S-diacylglycerol cysteine) is attached at Cys23. 2 disordered regions span residues 26-49 (PEFKRSSPPAPSLPPVTSSPLEAA) and 166-189 (MGNSPDSTPSATSPAPAPSPTPPG). Positions 169–179 (SPDSTPSATSP) are enriched in low complexity. Pro residues predominate over residues 180–189 (APAPSPTPPG).

This sequence belongs to the MTB12 family.

Its subcellular location is the cell membrane. This Mycobacterium tuberculosis (strain CDC 1551 / Oshkosh) protein is Putative lipoprotein LppK (lppK).